The primary structure comprises 210 residues: Imidazole glycerol phosphate synthase subunit HisH (210 aa).

The Glutamine amidotransferase type-1 domain occupies 3–210; sequence TIAIIDYGMG…ILKNFALSKA (208 aa). Residue cysteine 81 is the Nucleophile of the active site. Active-site residues include histidine 190 and glutamate 192.

Heterodimer of HisH and HisF.

The protein resides in the cytoplasm. The enzyme catalyses 5-[(5-phospho-1-deoxy-D-ribulos-1-ylimino)methylamino]-1-(5-phospho-beta-D-ribosyl)imidazole-4-carboxamide + L-glutamine = D-erythro-1-(imidazol-4-yl)glycerol 3-phosphate + 5-amino-1-(5-phospho-beta-D-ribosyl)imidazole-4-carboxamide + L-glutamate + H(+). It catalyses the reaction L-glutamine + H2O = L-glutamate + NH4(+). Its pathway is amino-acid biosynthesis; L-histidine biosynthesis; L-histidine from 5-phospho-alpha-D-ribose 1-diphosphate: step 5/9. Functionally, IGPS catalyzes the conversion of PRFAR and glutamine to IGP, AICAR and glutamate. The HisH subunit catalyzes the hydrolysis of glutamine to glutamate and ammonia as part of the synthesis of IGP and AICAR. The resulting ammonia molecule is channeled to the active site of HisF. This is Imidazole glycerol phosphate synthase subunit HisH from Geobacter metallireducens (strain ATCC 53774 / DSM 7210 / GS-15).